We begin with the raw amino-acid sequence, 1463 residues long: Chitin binding domain (ChtBD2) containing chtb-1 (1463 aa).

The signal sequence occupies residues 1–17 (MLRNLILITLLVASGHG). A disordered region spans residues 70–99 (SSVPSVPAENTQPQQHPKARKPASPNICEQ). A Chitin-binding type-2 domain is found at 94–164 (PNICEQDNGA…IVPKRMSSLS (71 aa)). An intrachain disulfide couples cysteine 141 to cysteine 154. 2 disordered regions span residues 720–773 (IDSD…DFPI) and 841–869 (KNPK…FPDS). The span at 722-734 (SDTNSTTNPSQPE) shows a compositional bias: polar residues. Composition is skewed to basic residues over residues 740-756 (NNTK…KPKK) and 843-853 (PKKRKTKRRKQ).

The sequence is that of Chitin binding domain (ChtBD2) containing chtb-1 from Caenorhabditis elegans.